A 460-amino-acid chain; its full sequence is Probable lipid II flippase MurJ (460 aa).

11 helical membrane-spanning segments follow: residues 4-24 (ILGA…PNLF), 50-70 (FASL…LLVA), 95-115 (IVAI…LGAL), 122-142 (FFAS…ALLI), 155-175 (LSYG…YPLV), 228-248 (IASF…VSYL), 257-277 (LPLA…IAIA), 292-312 (KAWF…IMLS), 336-356 (VFSL…FSLW), 366-386 (AAKI…SLMP), and 428-448 (LVIL…KSWV).

This sequence belongs to the MurJ/MviN family.

The protein localises to the cell inner membrane. It participates in cell wall biogenesis; peptidoglycan biosynthesis. Involved in peptidoglycan biosynthesis. Transports lipid-linked peptidoglycan precursors from the inner to the outer leaflet of the cytoplasmic membrane. In Helicobacter pylori (strain J99 / ATCC 700824) (Campylobacter pylori J99), this protein is Probable lipid II flippase MurJ.